A 309-amino-acid chain; its full sequence is Methionyl-tRNA formyltransferase (309 aa).

Residue 109 to 112 coordinates (6S)-5,6,7,8-tetrahydrofolate; it reads SLLP.

It belongs to the Fmt family.

The enzyme catalyses L-methionyl-tRNA(fMet) + (6R)-10-formyltetrahydrofolate = N-formyl-L-methionyl-tRNA(fMet) + (6S)-5,6,7,8-tetrahydrofolate + H(+). Attaches a formyl group to the free amino group of methionyl-tRNA(fMet). The formyl group appears to play a dual role in the initiator identity of N-formylmethionyl-tRNA by promoting its recognition by IF2 and preventing the misappropriation of this tRNA by the elongation apparatus. This is Methionyl-tRNA formyltransferase from Clostridium botulinum (strain Alaska E43 / Type E3).